The chain runs to 397 residues: Elongation factor Tu (397 aa).

In terms of domain architecture, tr-type G spans Lys10–Glu206. Positions Gly19 to Thr26 are G1. Gly19–Thr26 is a binding site for GTP. Thr26 serves as a coordination point for Mg(2+). Positions Gly62–Ser66 are G2. A G3 region spans residues Asp83–Gly86. Residues Asp83 to His87 and Asn138 to Asp141 each bind GTP. A G4 region spans residues Asn138–Asp141. Residues Ser176–Leu178 are G5.

The protein belongs to the TRAFAC class translation factor GTPase superfamily. Classic translation factor GTPase family. EF-Tu/EF-1A subfamily. In terms of assembly, monomer.

The protein resides in the cytoplasm. It carries out the reaction GTP + H2O = GDP + phosphate + H(+). Functionally, GTP hydrolase that promotes the GTP-dependent binding of aminoacyl-tRNA to the A-site of ribosomes during protein biosynthesis. The polypeptide is Elongation factor Tu (Kineococcus radiotolerans (strain ATCC BAA-149 / DSM 14245 / SRS30216)).